The chain runs to 522 residues: ATP synthase subunit alpha 2 (522 aa).

176–183 (GDRQTGKT) contacts ATP.

The protein belongs to the ATPase alpha/beta chains family. In terms of assembly, F-type ATPases have 2 components, CF(1) - the catalytic core - and CF(0) - the membrane proton channel. CF(1) has five subunits: alpha(3), beta(3), gamma(1), delta(1), epsilon(1). CF(0) has three main subunits: a(1), b(2) and c(9-12). The alpha and beta chains form an alternating ring which encloses part of the gamma chain. CF(1) is attached to CF(0) by a central stalk formed by the gamma and epsilon chains, while a peripheral stalk is formed by the delta and b chains.

The protein resides in the cell inner membrane. It catalyses the reaction ATP + H2O + 4 H(+)(in) = ADP + phosphate + 5 H(+)(out). Produces ATP from ADP in the presence of a proton gradient across the membrane. The alpha chain is a regulatory subunit. This chain is ATP synthase subunit alpha 2, found in Syntrophotalea carbinolica (strain DSM 2380 / NBRC 103641 / GraBd1) (Pelobacter carbinolicus).